The sequence spans 572 residues: Sulfate adenylyltransferase (572 aa).

The tract at residues 1 to 169 (MANTPHGGVL…IQAINKLNHY (169 aa)) is N-terminal. The segment at 170 to 394 (DYVGLRYTPA…LRESHPPRAK (225 aa)) is catalytic. Q197 provides a ligand contact to sulfate. ATP is bound by residues 197-200 (QTRN) and 291-294 (GRDH). Catalysis depends on residues T198, R199, and N200. R199 is a sulfate binding site. Sulfate is bound at residue A295. Position 333 (M333) interacts with ATP. The segment at 395–572 (QGFTIFLTGH…LLESQGFFGN (178 aa)) is allosteric regulation domain; adenylyl-sulfate kinase-like. 3'-phosphoadenylyl sulfate contacts are provided by residues 434–437 (ETVR), R451, 477–478 (IA), and K515.

This sequence in the N-terminal section; belongs to the sulfate adenylyltransferase family. It in the C-terminal section; belongs to the APS kinase family. As to quaternary structure, homohexamer. Dimer of trimers.

The protein localises to the cytoplasm. The catalysed reaction is sulfate + ATP + H(+) = adenosine 5'-phosphosulfate + diphosphate. It participates in sulfur metabolism; hydrogen sulfide biosynthesis; sulfite from sulfate: step 1/3. Allosterically inhibited by 3'-phosphoadenosine 5'-phosphosulfate (PAPS). Its function is as follows. Catalyzes the first intracellular reaction of sulfate assimilation, forming adenosine-5'-phosphosulfate (APS) from inorganic sulfate and ATP. Plays an important role in sulfate activation as a component of the biosynthesis pathway of sulfur-containing amino acids. The protein is Sulfate adenylyltransferase of Yarrowia lipolytica (strain CLIB 122 / E 150) (Yeast).